We begin with the raw amino-acid sequence, 110 residues long: Glycine-rich selenoprotein (110 aa).

Residues 1–20 (MVYIDHNGRVWEKRPWDWRR) lie on the Lumenal side of the membrane. Residues 21-41 (IVELFVGIWFAIKQLFLTFLA) form a helical; Signal-anchor for type III membrane protein membrane-spanning segment. The Cytoplasmic segment spans residues 42–110 (PFTGNNNQAN…CNMPAGGGUG (69 aa)). Residues 51-110 (NPRRGNGWGGGGGWGGGGGGGGGGGGGRPGSGSGGLRPNRRIGRIQPTMSCNMPAGGGUG) form a disordered region. Residues 56 to 85 (NGWGGGGGWGGGGGGGGGGGGGRPGSGSGG) are compositionally biased toward gly residues. Position 109 (selenocysteine 109) is a non-standard amino acid, selenocysteine.

The protein resides in the golgi apparatus membrane. Its function is as follows. Plays a role in the life span. May be involved in regulating the redox state of the cell and possesses anticarcinogenic properties. In Drosophila melanogaster (Fruit fly), this protein is Glycine-rich selenoprotein (SelG).